Consider the following 335-residue polypeptide: Probable nicotianamine synthase 2 (335 aa).

It belongs to the nicotianamine synthase (NAS)-like family.

The enzyme catalyses 3 S-adenosyl-L-methionine = nicotianamine + 3 S-methyl-5'-thioadenosine + 3 H(+). Its function is as follows. Synthesizes nicotianamine, a polyamine that is the first intermediate in the synthesis of the phytosiderophores of the mugineic acid type found in gramineae which serves as a sensor for the physiological iron status within the plant, and/or might be involved in the transport of iron. This is Probable nicotianamine synthase 2 (NAS2) from Hordeum vulgare (Barley).